The chain runs to 301 residues: HTH-type transcriptional activator NagR (301 aa).

Residues 6–63 (IDLNLLVVFNQLLLDRSVSTAGEKLGLTQPAVSNSLKRLRAALKDDLFLRTSKGMEPT) form the HTH lysR-type domain. Residues 23–42 (VSTAGEKLGLTQPAVSNSLK) constitute a DNA-binding region (H-T-H motif).

The protein belongs to the LysR transcriptional regulatory family.

Its function is as follows. May regulate the expression of the naphthalene (nagA-F) and salicylate (nagG-M) metabolism genes. The protein is HTH-type transcriptional activator NagR of Ralstonia sp.